The primary structure comprises 665 residues: Fructose-1,6-bisphosphatase class 3 (665 aa).

This sequence belongs to the FBPase class 3 family. Mn(2+) is required as a cofactor.

The enzyme catalyses beta-D-fructose 1,6-bisphosphate + H2O = beta-D-fructose 6-phosphate + phosphate. Its pathway is carbohydrate biosynthesis; gluconeogenesis. This Alkaliphilus metalliredigens (strain QYMF) protein is Fructose-1,6-bisphosphatase class 3.